A 578-amino-acid polypeptide reads, in one-letter code: Telomere repeat-binding protein 1 (578 aa).

One can recognise a Ubiquitin-like domain in the interval 293 to 372 (VKLRIKSFRV…HLDSLDFSLE (80 aa)). The disordered stretch occupies residues 440 to 467 (ELSSQSQPPSRKSRRSEQQQQQAAQRRI). An HTH myb-type domain is found at 463 to 522 (AQRRIRRPFSVAEVEALVQAVEKLGTGRWRDVKLCAFEDADHRTYVDLKDKWKTLVHTAK). Interaction with DNA stretches follow at residues 465–469 (RRIRR), 511–515 (KDKWK), and 522–529 (KISPQQRR). Positions 491–518 (WRDVKLCAFEDADHRTYVDLKDKWKTLV) form a DNA-binding region, H-T-H motif.

Homodimer and heterodimer with TRP2 and TRP3. Interacts with KU70. As to expression, expressed ubiquitously. Highest expression in flowers and leaves.

Its subcellular location is the nucleus. In terms of biological role, binds specifically to the plant telomeric double-stranded DNA sequences 5'-GGTTTAG-3'. At least 4 repeats of telomeric sequences are required for binding. Induces DNA bending. The protein is Telomere repeat-binding protein 1 (TRP1) of Arabidopsis thaliana (Mouse-ear cress).